The sequence spans 206 residues: Large ribosomal subunit protein uL4 (206 aa).

This sequence belongs to the universal ribosomal protein uL4 family. Part of the 50S ribosomal subunit.

Its function is as follows. One of the primary rRNA binding proteins, this protein initially binds near the 5'-end of the 23S rRNA. It is important during the early stages of 50S assembly. It makes multiple contacts with different domains of the 23S rRNA in the assembled 50S subunit and ribosome. Forms part of the polypeptide exit tunnel. In Afipia carboxidovorans (strain ATCC 49405 / DSM 1227 / KCTC 32145 / OM5) (Oligotropha carboxidovorans), this protein is Large ribosomal subunit protein uL4.